The chain runs to 93 residues: Putative ribosomal protein eL43-like (93 aa).

The segment at 40–61 (CSFCGKTKMKRRAVKIRHCNSC) adopts a C4-type zinc-finger fold.

This sequence belongs to the eukaryotic ribosomal protein eL43 family.

The sequence is that of Putative ribosomal protein eL43-like (RPL37AP8) from Homo sapiens (Human).